The chain runs to 500 residues: MTCGSGFRGRAFSCVSACGPRPGRCCITAAPYRGISCYRGLTGGFGSRSICGGFRAGSFGRSFGYRSGGVGGLNPPCITTVSVNESLLTPLNLEIDPNAQCVKQEEKEQIKCLNNRFAAFIDKVRFLEQQNKLLETKLQFYQNRQCCESNLEPLFNGYIETLRREAECVEADSGRLSSELNSLQEVLEGYKKKYEEEVALRATAENEFVALKKDVDCAYLRKSDLEANVEALIQEIDFLRRLYEEEIRVLQAHISDTSVIVKMDNSRDLNMDNIVAEIKAQYDDIASRSRAEAESWYRSKCEEIKATVIRHGETLRRTKEEINELNRVIQRLTAEVENAKCQNSKLEAAVTQAEQQGEAALNDAKCKLAGLEEALQKAKQDMACLLKEYQEVMNSKLGLDIEIATYRRLLEGEEQRLCEGVGSVNVCVSSSRGGVVCGDLCVSGSRPVTGSVCSAPCSGNLAVSTGLCAPCGPCNSVTSCGLGGISSCGVGSCASVCRKC.

The segment at 1–106 is head; sequence MTCGSGFRGR…PNAQCVKQEE (106 aa). In terms of domain architecture, IF rod spans 106–417; it reads EKEQIKCLNN…RLLEGEEQRL (312 aa). The tract at residues 107 to 141 is coil 1A; sequence KEQIKCLNNRFAAFIDKVRFLEQQNKLLETKLQFY. Residues 142 to 151 form a linker 1 region; it reads QNRQCCESNL. The tract at residues 152 to 252 is coil 1B; it reads EPLFNGYIET…YEEEIRVLQA (101 aa). A Glycyl lysine isopeptide (Lys-Gly) (interchain with G-Cter in SUMO1) cross-link involves residue lysine 212. Residues 253 to 269 form a linker 12 region; that stretch reads HISDTSVIVKMDNSRDL. The segment at 270–413 is coil 2; that stretch reads NMDNIVAEIK…ATYRRLLEGE (144 aa). Residues 414 to 500 form a tail region; the sequence is EQRLCEGVGS…GSCASVCRKC (87 aa).

Belongs to the intermediate filament family. As to quaternary structure, heterotetramer of two type I and two type II keratins.

In Bos taurus (Bovine), this protein is Keratin, type II cuticular Hb1.